A 115-amino-acid chain; its full sequence is Thrombospondin type-1 domain-containing protein 8 (115 aa).

The N-terminal stretch at 1–21 (MARTPGALLLAPLLLLQLATP) is a signal peptide. Positions 53-104 (DSILGPWGKWRCLCDLGKQERSREVVGTAPGPVFMDPEKLIQLRPCRQRDCP) constitute a TSP type-1 domain.

The polypeptide is Thrombospondin type-1 domain-containing protein 8 (Homo sapiens (Human)).